The chain runs to 324 residues: Pyruvate synthase subunit PorB (324 aa).

[4Fe-4S] cluster contacts are provided by C26, C29, and C57. Residues 150 to 172 form a disordered region; it reads TGNQRSGSTPPGSDTTTAPVGKK. A compositionally biased stretch (low complexity) spans 155–166; that stretch reads SGSTPPGSDTTT. C228 is a [4Fe-4S] cluster binding site.

As to quaternary structure, heterotetramer of one alpha, one beta, one delta and one gamma chain. Requires [4Fe-4S] cluster as cofactor.

It carries out the reaction 2 oxidized [2Fe-2S]-[ferredoxin] + pyruvate + CoA = 2 reduced [2Fe-2S]-[ferredoxin] + acetyl-CoA + CO2 + H(+). The chain is Pyruvate synthase subunit PorB (porB) from Thermotoga maritima (strain ATCC 43589 / DSM 3109 / JCM 10099 / NBRC 100826 / MSB8).